Consider the following 198-residue polypeptide: Protein GrpE (198 aa).

This sequence belongs to the GrpE family. Homodimer.

The protein resides in the cytoplasm. Functionally, participates actively in the response to hyperosmotic and heat shock by preventing the aggregation of stress-denatured proteins, in association with DnaK and GrpE. It is the nucleotide exchange factor for DnaK and may function as a thermosensor. Unfolded proteins bind initially to DnaJ; upon interaction with the DnaJ-bound protein, DnaK hydrolyzes its bound ATP, resulting in the formation of a stable complex. GrpE releases ADP from DnaK; ATP binding to DnaK triggers the release of the substrate protein, thus completing the reaction cycle. Several rounds of ATP-dependent interactions between DnaJ, DnaK and GrpE are required for fully efficient folding. The sequence is that of Protein GrpE from Baumannia cicadellinicola subsp. Homalodisca coagulata.